Here is a 1108-residue protein sequence, read N- to C-terminus: Receptor-type guanylate cyclase gcy-20 (1108 aa).

An N-terminal signal peptide occupies residues 1–15 (MRILLLLLQNILVFC). Residues 16-474 (QFLQTIKVGL…ECPADFVKEY (459 aa)) lie on the Extracellular side of the membrane. N-linked (GlcNAc...) asparagine glycosylation is found at asparagine 66, asparagine 131, asparagine 319, asparagine 341, asparagine 366, and asparagine 380. The chain crosses the membrane as a helical span at residues 475-495 (LVYTIIAAFIVILALLAGCAG). The Protein kinase domain occupies 483–803 (FIVILALLAG…IEQVRSHLNG (321 aa)). Residues 489-497 (LLAGCAGLL) and lysine 571 each bind ATP. The Cytoplasmic portion of the chain corresponds to 496–1108 (LLYTMHMKRK…QAGDNNSETV (613 aa)). The region spanning 876–1006 (TIFFSDVVQF…DAVNTASRME (131 aa)) is the Guanylate cyclase domain. Positions 1083-1108 (LEKNAEGSETSSLSVDQAGDNNSETV) are disordered. The span at 1089-1108 (GSETSSLSVDQAGDNNSETV) shows a compositional bias: polar residues.

This sequence belongs to the adenylyl cyclase class-4/guanylyl cyclase family. As to expression, expressed asymmetrically in ASE left (ASEL) sensory neuron. Expressed in excretory gland and canal cell.

Its subcellular location is the cell membrane. The enzyme catalyses GTP = 3',5'-cyclic GMP + diphosphate. Guanylate cyclase involved in the production of the second messenger cGMP. The protein is Receptor-type guanylate cyclase gcy-20 of Caenorhabditis elegans.